The primary structure comprises 183 residues: MHAIAENHGVKASYTKEELQACGQGRLFGEGAAKLPVDQMLMVDRVSQISAEGGAYGHGIVRAQLDINPDLWFFKCHFVGDPVMPGCLGLDAMWQLVGFFLAWKGHKGLGRALGVGEVKFTGQVLPSAKSVEYVLDIKRVIARKLIMALADGTVYVDGKAIYTAKDLRVGLFDPAAMSGAEIK.

Histidine 77 is a catalytic residue.

This sequence belongs to the thioester dehydratase family. FabA subfamily. In terms of assembly, homodimer.

Its subcellular location is the cytoplasm. It carries out the reaction a (3R)-hydroxyacyl-[ACP] = a (2E)-enoyl-[ACP] + H2O. The catalysed reaction is (3R)-hydroxydecanoyl-[ACP] = (2E)-decenoyl-[ACP] + H2O. The enzyme catalyses (2E)-decenoyl-[ACP] = (3Z)-decenoyl-[ACP]. It participates in lipid metabolism; fatty acid biosynthesis. Functionally, necessary for the introduction of cis unsaturation into fatty acids. Catalyzes the dehydration of (3R)-3-hydroxydecanoyl-ACP to E-(2)-decenoyl-ACP and then its isomerization to Z-(3)-decenoyl-ACP. Can catalyze the dehydratase reaction for beta-hydroxyacyl-ACPs with saturated chain lengths up to 16:0, being most active on intermediate chain length. The polypeptide is 3-hydroxydecanoyl-[acyl-carrier-protein] dehydratase (Hahella chejuensis (strain KCTC 2396)).